A 395-amino-acid chain; its full sequence is S-adenosylmethionine synthase (395 aa).

Residue histidine 14 coordinates ATP. Position 16 (aspartate 16) interacts with Mg(2+). Glutamate 42 lines the K(+) pocket. Positions 55 and 98 each coordinate L-methionine. The tract at residues 98-108 (QSPDIALGVDK) is flexible loop. ATP contacts are provided by residues 174–176 (DGK), 240–241 (RF), aspartate 249, 255–256 (RK), alanine 272, and lysine 276. Aspartate 249 provides a ligand contact to L-methionine. Lysine 280 lines the L-methionine pocket.

The protein belongs to the AdoMet synthase family. As to quaternary structure, homotetramer; dimer of dimers. Mg(2+) serves as cofactor. The cofactor is K(+).

Its subcellular location is the cytoplasm. The enzyme catalyses L-methionine + ATP + H2O = S-adenosyl-L-methionine + phosphate + diphosphate. It functions in the pathway amino-acid biosynthesis; S-adenosyl-L-methionine biosynthesis; S-adenosyl-L-methionine from L-methionine: step 1/1. Functionally, catalyzes the formation of S-adenosylmethionine (AdoMet) from methionine and ATP. The overall synthetic reaction is composed of two sequential steps, AdoMet formation and the subsequent tripolyphosphate hydrolysis which occurs prior to release of AdoMet from the enzyme. This Thermotoga neapolitana (strain ATCC 49049 / DSM 4359 / NBRC 107923 / NS-E) protein is S-adenosylmethionine synthase.